Here is a 114-residue protein sequence, read N- to C-terminus: rRNA-processing protein cgrA (114 aa).

The segment covering 1 to 11 (MSSAIPTSSVN) has biased composition (polar residues). Residues 1–114 (MSSAIPTSSV…REKRNKLLHS (114 aa)) are disordered. Basic and acidic residues predominate over residues 39 to 93 (YEKRLEARKRQEAVKEHERELREEKEAERKAQIQKIKDRRAAKEEKERYEKMAEK). Residues 40 to 101 (EKRLEARKRQ…EKMHRKRVER (62 aa)) are a coiled coil. Basic residues predominate over residues 94 to 114 (MHRKRVERLKRREKRNKLLHS).

Belongs to the CGR1 family.

The protein localises to the nucleus. It is found in the nucleolus. Functionally, involved in nucleolar integrity and required for processing of the pre-rRNA for the 60S ribosome subunit. This Aspergillus fumigatus (strain ATCC MYA-4609 / CBS 101355 / FGSC A1100 / Af293) (Neosartorya fumigata) protein is rRNA-processing protein cgrA (cgrA).